A 20-amino-acid polypeptide reads, in one-letter code: VSAKPAKXXVTAGEQAIAMT.

The protein belongs to the cytochrome c oxidase VIII family. In terms of assembly, component of the cytochrome c oxidase (complex IV, CIV), a multisubunit enzyme composed of 14 subunits. The complex is composed of a catalytic core of 3 subunits MT-CO1, MT-CO2 and MT-CO3, encoded in the mitochondrial DNA, and 11 supernumerary subunits COX4I, COX5A, COX5B, COX6A, COX6B, COX6C, COX7A, COX7B, COX7C, COX8 and NDUFA4, which are encoded in the nuclear genome. The complex exists as a monomer or a dimer and forms supercomplexes (SCs) in the inner mitochondrial membrane with NADH-ubiquinone oxidoreductase (complex I, CI) and ubiquinol-cytochrome c oxidoreductase (cytochrome b-c1 complex, complex III, CIII), resulting in different assemblies (supercomplex SCI(1)III(2)IV(1) and megacomplex MCI(2)III(2)IV(2)).

It is found in the mitochondrion inner membrane. The protein operates within energy metabolism; oxidative phosphorylation. Component of the cytochrome c oxidase, the last enzyme in the mitochondrial electron transport chain which drives oxidative phosphorylation. The respiratory chain contains 3 multisubunit complexes succinate dehydrogenase (complex II, CII), ubiquinol-cytochrome c oxidoreductase (cytochrome b-c1 complex, complex III, CIII) and cytochrome c oxidase (complex IV, CIV), that cooperate to transfer electrons derived from NADH and succinate to molecular oxygen, creating an electrochemical gradient over the inner membrane that drives transmembrane transport and the ATP synthase. Cytochrome c oxidase is the component of the respiratory chain that catalyzes the reduction of oxygen to water. Electrons originating from reduced cytochrome c in the intermembrane space (IMS) are transferred via the dinuclear copper A center (CU(A)) of subunit 2 and heme A of subunit 1 to the active site in subunit 1, a binuclear center (BNC) formed by heme A3 and copper B (CU(B)). The BNC reduces molecular oxygen to 2 water molecules using 4 electrons from cytochrome c in the IMS and 4 protons from the mitochondrial matrix. In Thunnus obesus (Bigeye tuna), this protein is Cytochrome c oxidase subunit 8B, mitochondrial.